We begin with the raw amino-acid sequence, 374 residues long: PqqA peptide cyclase (374 aa).

Residues 13–230 enclose the Radical SAM core domain; it reads VPAPIAMLAE…EAEARLRGTL (218 aa). Residues cysteine 27, cysteine 31, and cysteine 34 each contribute to the [4Fe-4S] cluster site.

Belongs to the radical SAM superfamily. PqqE family. In terms of assembly, interacts with PqqD. The interaction is necessary for activity of PqqE. [4Fe-4S] cluster is required as a cofactor.

The catalysed reaction is [PQQ precursor protein] + S-adenosyl-L-methionine = E-Y cross-linked-[PQQ precursor protein] + 5'-deoxyadenosine + L-methionine + H(+). Its pathway is cofactor biosynthesis; pyrroloquinoline quinone biosynthesis. Catalyzes the cross-linking of a glutamate residue and a tyrosine residue in the PqqA protein as part of the biosynthesis of pyrroloquinoline quinone (PQQ). The sequence is that of PqqA peptide cyclase from Ruegeria pomeroyi (strain ATCC 700808 / DSM 15171 / DSS-3) (Silicibacter pomeroyi).